Reading from the N-terminus, the 403-residue chain is Ubiquitin-like modifier-activating enzyme 5 (403 aa).

Positions 81, 102, 125, 148, and 182 each coordinate ATP. Cysteine 224 and cysteine 227 together coordinate Zn(2+). The active-site Glycyl thioester intermediate is cysteine 248. Positions 301 and 306 each coordinate Zn(2+). The span at 306-315 (CRKQQEEYKK) shows a compositional bias: basic and acidic residues. Positions 306–337 (CRKQQEEYKKRAPAQPTQETAPQEEEEVVHED) are disordered. Positions 333 to 345 (VVHEDNEWGIELV) match the UFM1-interacting sequence (UIS) motif. Positions 346–376 (SEVSEEELKNSSGPVPTLPEGITVAYTVPKK) are linker. Residues serine 357 and serine 392 each carry the phosphoserine modification. Residues 388–403 (DSGESLEDLMARMKKM) carry the UFC1-binding sequence (UFC) motif.

The protein belongs to the ubiquitin-activating E1 family. UBA5 subfamily. In terms of assembly, homodimer; homodimerization is required for UFM1 activation. Interacts (via UIS motif) with UFM1; binds UFM1 via a trans-binding mechanism in which UFM1 interacts with distinct sites in both subunits of the UBA5 homodimer. Interacts (via C-terminus) with UFC1. Interacts (via UIS motif) with GABARAPL2 and, with lower affinity, with GABARAP and GABARAPL1.

It is found in the cytoplasm. The protein localises to the nucleus. It localises to the endoplasmic reticulum membrane. Its subcellular location is the golgi apparatus. Its function is as follows. E1-like enzyme which specifically catalyzes the first step in ufmylation. Activates UFM1 by first adenylating its C-terminal glycine residue with ATP, and thereafter linking this residue to the side chain of a cysteine residue in E1, yielding a UFM1-E1 thioester and free AMP. Activates UFM1 via a trans-binding mechanism, in which UFM1 interacts with distinct sites in both subunits of the UBA5 homodimer. Trans-binding also promotes stabilization of the UBA5 homodimer, and enhances ATP-binding. Transfer of UFM1 from UBA5 to the E2-like enzyme UFC1 also takes place using a trans mechanism. Ufmylation plays a key role in various processes, such as ribosome recycling, response to DNA damage, interferon response or reticulophagy (also called ER-phagy). Ufmylation is essential for erythroid differentiation of both megakaryocytes and erythrocytes. This Rattus norvegicus (Rat) protein is Ubiquitin-like modifier-activating enzyme 5.